Here is a 114-residue protein sequence, read N- to C-terminus: T cell receptor beta variable 6-2 (114 aa).

Residues 1–21 form the signal peptide; sequence MSLGLLCCGAFSLLWAGPVNA. One can recognise an Ig-like domain in the interval 22–114; it reads GVTQTPKFRV…TSVYFCASSY (93 aa). Cys42 and Cys110 are oxidised to a cystine. A glycan (N-linked (GlcNAc...) asparagine) is linked at Asn84.

As to quaternary structure, alpha-beta TR is a heterodimer composed of an alpha and beta chain; disulfide-linked. The alpha-beta TR is associated with the transmembrane signaling CD3 coreceptor proteins to form the TR-CD3 (TcR or TCR). The assembly of alpha-beta TR heterodimers with CD3 occurs in the endoplasmic reticulum where a single alpha-beta TR heterodimer associates with one CD3D-CD3E heterodimer, one CD3G-CD3E heterodimer and one CD247 homodimer forming a stable octameric structure. CD3D-CD3E and CD3G-CD3E heterodimers preferentially associate with TR alpha and TR beta chains, respectively. The association of the CD247 homodimer is the last step of TcR assembly in the endoplasmic reticulum and is required for transport to the cell surface.

The protein localises to the cell membrane. In terms of biological role, v region of the variable domain of T cell receptor (TR) beta chain that participates in the antigen recognition. Alpha-beta T cell receptors are antigen specific receptors which are essential to the immune response and are present on the cell surface of T lymphocytes. Recognize peptide-major histocompatibility (MH) (pMH) complexes that are displayed by antigen presenting cells (APC), a prerequisite for efficient T cell adaptive immunity against pathogens. Binding of alpha-beta TR to pMH complex initiates TR-CD3 clustering on the cell surface and intracellular activation of LCK that phosphorylates the ITAM motifs of CD3G, CD3D, CD3E and CD247 enabling the recruitment of ZAP70. In turn ZAP70 phosphorylates LAT, which recruits numerous signaling molecules to form the LAT signalosome. The LAT signalosome propagates signal branching to three major signaling pathways, the calcium, the mitogen-activated protein kinase (MAPK) kinase and the nuclear factor NF-kappa-B (NF-kB) pathways, leading to the mobilization of transcription factors that are critical for gene expression and essential for T cell growth and differentiation. The T cell repertoire is generated in the thymus, by V-(D)-J rearrangement. This repertoire is then shaped by intrathymic selection events to generate a peripheral T cell pool of self-MH restricted, non-autoaggressive T cells. Post-thymic interaction of alpha-beta TR with the pMH complexes shapes TR structural and functional avidity. This chain is T cell receptor beta variable 6-2, found in Homo sapiens (Human).